The primary structure comprises 281 residues: Putative integrase/recombinase y4rD (281 aa).

The Core-binding (CB) domain occupies 5–98; it reads LLLAPLLESY…AIRSFFHHVA (94 aa). The Tyr recombinase domain maps to 122–281; the sequence is EVTHHLTKAE…TMSGTENASV (160 aa). Catalysis depends on residues Arg162, Lys188, His262, and Arg265.

The protein belongs to the 'phage' integrase family.

Functionally, seems to be non-functional. This Sinorhizobium fredii (strain NBRC 101917 / NGR234) protein is Putative integrase/recombinase y4rD.